The chain runs to 115 residues: UPF0738 protein SAB0871 (115 aa).

It belongs to the UPF0738 family.

This is UPF0738 protein SAB0871 from Staphylococcus aureus (strain bovine RF122 / ET3-1).